The sequence spans 474 residues: Gamma-aminobutyric acid receptor subunit beta-1 (474 aa).

An N-terminal signal peptide occupies residues 1-25; the sequence is MWTVQNRESLGLLSFPVMVAMVCCA. At 26 to 245 the chain is on the extracellular side; sequence HSSNEPSNMS…SFRLKRNIGY (220 aa). Asn33 and Asn105 each carry an N-linked (GlcNAc...) asparagine glycan. Tyr122 contacts histamine. The cysteines at positions 161 and 175 are disulfide-linked. Asn174 carries an N-linked (GlcNAc...) asparagine glycan. Histamine is bound by residues 181–182 and Thr227; that span reads SY. Positions 182 and 227 each coordinate 4-aminobutanoate. 3 helical membrane passes run 246–267, 271–293, and 305–327; these read FILQ…SFWI, ASAA…STHL, and AIDI…YAFV. Topologically, residues 328 to 451 are cytoplasmic; it reads NYIFFGKGPQ…DLTDVNSIDK (124 aa). The chain crosses the membrane as a helical span at residues 452–473; that stretch reads WSRMFFPITFSLFNVVYWLYYV.

This sequence belongs to the ligand-gated ion channel (TC 1.A.9) family. Gamma-aminobutyric acid receptor (TC 1.A.9.5) subfamily. GABRB1 sub-subfamily. In terms of assembly, heteropentamer, formed by a combination of alpha (GABRA1-6), beta (GABRB1-3), gamma (GABRG1-3), delta (GABRD), epsilon (GABRE), rho (GABRR1-3), pi (GABRP) and theta (GABRQ) chains, each subunit exhibiting distinct physiological and pharmacological properties. Binds UBQLN1.

Its subcellular location is the postsynaptic cell membrane. The protein resides in the cell membrane. The enzyme catalyses chloride(in) = chloride(out). Its activity is regulated as follows. Potentiated by histamine. In terms of biological role, beta subunit of the heteropentameric ligand-gated chloride channel gated by gamma-aminobutyric acid (GABA), a major inhibitory neurotransmitter in the brain. GABA-gated chloride channels, also named GABA(A) receptors (GABAAR), consist of five subunits arranged around a central pore and contain GABA active binding site(s) located at the alpha and beta subunit interface(s). When activated by GABA, GABAARs selectively allow the flow of chloride anions across the cell membrane down their electrochemical gradient. Chloride influx into the postsynaptic neuron following GABAAR opening decreases the neuron ability to generate a new action potential, thereby reducing nerve transmission. Beta-containing GABAARs can simultaneously bind GABA and histamine where histamine binds at the interface of two neighboring beta subunits, which may be involved in the regulation of sleep and wakefulness. The chain is Gamma-aminobutyric acid receptor subunit beta-1 from Mus musculus (Mouse).